Here is a 241-residue protein sequence, read N- to C-terminus: MSFWVEVSLNTPAQLSLPLYLPDDETFASFWPGDNASLLAALQNVLRQEHSGYIYLWAREGAGRSHLLHAACAELSQRGDAVGYVPLDKRTWFVPEVLDGMEHLSLVCIDNIECVAGDELWEMAIFDLYNRILESGKTRLLITGDRPPRQLNLGLPDLASRLDWGQIYKLQPLSDEDKLQALQLRARLRGFELPEDVGRFLLKRLDREMRTLFMTLDQLDHASITAQRKLTIPFVKEILKL.

It belongs to the DnaA family. HdA subfamily. The active form seems to be an ADP-bound monomer. Forms the RIDA complex (regulatory inactivation of DnaA) of ATP-DnaA, ADP-Hda and the DNA-loaded beta sliding clamp (dnaN).

In terms of biological role, mediates the interaction of DNA replication initiator protein DnaA with DNA polymerase subunit beta sliding clamp (dnaN). Stimulates hydrolysis of ATP-DnaA to ADP-DnaA, rendering DnaA inactive for reinitiation, a process called regulatory inhibition of DnaA or RIDA. This chain is DnaA regulatory inactivator Hda, found in Salmonella paratyphi A (strain ATCC 9150 / SARB42).